We begin with the raw amino-acid sequence, 57 residues long: Major exported protein (57 aa).

The protein belongs to the hcp1 family. Homodimer.

It is found in the secreted. This chain is Major exported protein, found in Pseudomonas syringae pv. ribicola.